The chain runs to 204 residues: MNLFKNFLKEWGLFLLILSLLALSRIFFWSNVRVEGHSMDPTLADGEILFVVKHLPIDRFDIVVAHEEDGNKDIVKRVIGMPGDTIRYENDKLYINDKETDEPYLADYIKRFKDDKLQSTYSGKGFEGNKGTFFRSIAQKAQAFTVDVNYNTNFSFTVPEGEYLLLGDDRLVSSDSRHVGTFKAKDITGEAKFRFWPITRIGTF.

At 1–10 (MNLFKNFLKE) the chain is on the cytoplasmic side. Residues 11 to 30 (WGLFLLILSLLALSRIFFWS) traverse the membrane as a helical segment. The Extracellular segment spans residues 31 to 204 (NVRVEGHSMD…FWPITRIGTF (174 aa)). Active-site residues include serine 38 and lysine 76.

The protein belongs to the peptidase S26 family.

It localises to the cell membrane. The enzyme catalyses Cleavage of hydrophobic, N-terminal signal or leader sequences from secreted and periplasmic proteins.. This Streptococcus pneumoniae (strain ATCC BAA-255 / R6) protein is Signal peptidase I (lepB).